The primary structure comprises 549 residues: GATA-type transcription factor sreA (549 aa).

Positions 40–100 (AQAGREHPQD…TSPKSQKDTS (61 aa)) are disordered. Composition is skewed to basic and acidic residues over residues 43 to 72 (GREH…HEGE) and 86 to 97 (HHVEKTSPKSQK). The GATA-type 1 zinc-finger motif lies at 106–130 (CSNCGTKSTPLWRRSPTGAMICNAC). The segment at 141-174 (RPTKRNRTQASPEAYHPQNQSVGSQPDPAVTGSE) is disordered. A cystein-rich region (CRR) region spans residues 180-198 (CPGGGNCNGTGGAEGCDGC). The interval 223-244 (GNSDAVPSPEAEAPARNSGQPE) is disordered. The GATA-type 2 zinc finger occupies 251-275 (CQNCGTTVTPLWRRDENGHPICNAC). 3 disordered regions span residues 306 to 332 (RENS…PATL), 375 to 459 (NSGA…RLSS), and 482 to 535 (LGRQ…MREQ). Low complexity predominate over residues 309 to 331 (SPTAATHSSHGSSASPEASSPAT). Positions 383-396 (HHPPPPRLLEPGHP) are enriched in pro residues. Residues 485 to 497 (QQQSQPHHPQSSP) are compositionally biased toward low complexity. Residues 498-515 (LAPTQAASQSLPGVSNMD) show a composition bias toward polar residues. A coiled-coil region spans residues 511–549 (VSNMDNHVEDRRAKLQREAEEMREQLRAKERELAELAGQ). The span at 516–535 (NHVEDRRAKLQREAEEMREQ) shows a compositional bias: basic and acidic residues.

The protein localises to the nucleus. Its function is as follows. GATA-type transcription repressor that regulates iron- acquisition genes through specific binding GATA sequence elements of target promoters. Iron acquisition regulation is critical for survival under both iron-limiting conditions (to acquire essential iron) and iron-replete conditions (to limit iron toxicity). SreA targets include genes encoding a number of key iron-regulated factors such as those involved in siderophore biosynthesis. The sequence is that of GATA-type transcription factor sreA from Emericella nidulans (strain FGSC A4 / ATCC 38163 / CBS 112.46 / NRRL 194 / M139) (Aspergillus nidulans).